The sequence spans 254 residues: 4-hydroxy-tetrahydrodipicolinate reductase (254 aa).

Residues Gly-10–Val-15 and Gly-101–Thr-103 contribute to the NAD(+) site. Catalysis depends on His-157, which acts as the Proton donor/acceptor. (S)-2,3,4,5-tetrahydrodipicolinate is bound at residue His-158. The active-site Proton donor is the Lys-161. Gly-167–Thr-168 is a binding site for (S)-2,3,4,5-tetrahydrodipicolinate.

This sequence belongs to the DapB family.

The protein localises to the cytoplasm. It carries out the reaction (S)-2,3,4,5-tetrahydrodipicolinate + NAD(+) + H2O = (2S,4S)-4-hydroxy-2,3,4,5-tetrahydrodipicolinate + NADH + H(+). It catalyses the reaction (S)-2,3,4,5-tetrahydrodipicolinate + NADP(+) + H2O = (2S,4S)-4-hydroxy-2,3,4,5-tetrahydrodipicolinate + NADPH + H(+). It participates in amino-acid biosynthesis; L-lysine biosynthesis via DAP pathway; (S)-tetrahydrodipicolinate from L-aspartate: step 4/4. In terms of biological role, catalyzes the conversion of 4-hydroxy-tetrahydrodipicolinate (HTPA) to tetrahydrodipicolinate. The sequence is that of 4-hydroxy-tetrahydrodipicolinate reductase from Symbiobacterium thermophilum (strain DSM 24528 / JCM 14929 / IAM 14863 / T).